Consider the following 308-residue polypeptide: Energy-coupling factor transporter ATP-binding protein EcfA2 (308 aa).

The 261-residue stretch at 3-263 (IEVKNISKVF…VDFLRENEME (261 aa)) folds into the ABC transporter domain. Position 40 to 47 (40 to 47 (GPTGSGKT)) interacts with ATP.

Belongs to the ABC transporter superfamily. Energy-coupling factor EcfA family. As to quaternary structure, forms a stable energy-coupling factor (ECF) transporter complex composed of 2 membrane-embedded substrate-binding proteins (S component), 2 ATP-binding proteins (A component) and 2 transmembrane proteins (T component).

The protein localises to the cell membrane. Its function is as follows. ATP-binding (A) component of a common energy-coupling factor (ECF) ABC-transporter complex. Unlike classic ABC transporters this ECF transporter provides the energy necessary to transport a number of different substrates. The protein is Energy-coupling factor transporter ATP-binding protein EcfA2 of Mycoplasma mobile (strain ATCC 43663 / 163K / NCTC 11711) (Mesomycoplasma mobile).